Here is a 165-residue protein sequence, read N- to C-terminus: Protein YELLOW LEAF 1, choloroplastic (165 aa).

A chloroplast-targeting transit peptide spans 1–51; the sequence is MPPLATMSSPGSLLLLTPAVYQGIGRNRGGQSQEGQSISSSRSLKTKLSVS. Residues 71 to 118 are disordered; that stretch reads TQTARRKSFSGPTSPPSGSVKEKVRSPKLDDGGTGFPPFRFGGGGGGG. Positions 79–89 are enriched in low complexity; it reads FSGPTSPPSGS. Residues 90 to 101 show a composition bias toward basic and acidic residues; the sequence is VKEKVRSPKLDD.

As to quaternary structure, interacts with atpB. In terms of tissue distribution, highly expressed in leaves. Expressed in leaf sheaths. Expressed at low levels in stems.

It localises to the plastid. Its subcellular location is the chloroplast. Its function is as follows. Required for photosynthetic protein complex assembly in chloroplast thylakoid membranes during leaf development. Maintains the abundance of the core protein complex PsaA-PsaB of photosystem I (PSI) in the thylakoid membrane. May play a role in the efficient biogenesis of the chloroplast ATP synthase complex, possibly by interacting with the beta subunit atpB. This is Protein YELLOW LEAF 1, choloroplastic from Oryza sativa subsp. japonica (Rice).